The following is a 323-amino-acid chain: PI-PLC X domain-containing protein 1 (323 aa).

Positions 30–206 constitute a PI-PLC X-box domain; sequence RLWDVPLHHL…QVIVSYEDES (177 aa).

As to expression, widely expressed.

Its subcellular location is the cytoplasm. This chain is PI-PLC X domain-containing protein 1 (PLCXD1), found in Homo sapiens (Human).